Consider the following 76-residue polypeptide: Esculentin-2MT1 (76 aa).

A signal peptide spans 1-22 (MFTMKKPLLLLFFLGTISLSLC). The propeptide occupies 23–37 (EEERNADEDDGEKEV). A disulfide bridge links Cys70 with Cys76.

Belongs to the frog skin active peptide (FSAP) family. Esculentin subfamily. Expressed by the skin glands.

It is found in the secreted. Its function is as follows. Antimicrobial peptide. In Amolops mantzorum (Sichuan torrent frog), this protein is Esculentin-2MT1.